Reading from the N-terminus, the 216-residue chain is ATP-dependent dethiobiotin synthetase BioD (216 aa).

Residue 13-18 participates in ATP binding; that stretch reads EVGKTY. Position 17 (Thr-17) interacts with Mg(2+). Lys-38 is a catalytic residue. Thr-42 is a substrate binding site. ATP-binding positions include Asp-47 and 112–115; that span reads EGVG. Mg(2+) contacts are provided by Asp-47 and Glu-112.

It belongs to the dethiobiotin synthetase family. As to quaternary structure, homodimer. Mg(2+) serves as cofactor.

The protein resides in the cytoplasm. It carries out the reaction (7R,8S)-7,8-diammoniononanoate + CO2 + ATP = (4R,5S)-dethiobiotin + ADP + phosphate + 3 H(+). The protein operates within cofactor biosynthesis; biotin biosynthesis; biotin from 7,8-diaminononanoate: step 1/2. In terms of biological role, catalyzes a mechanistically unusual reaction, the ATP-dependent insertion of CO2 between the N7 and N8 nitrogen atoms of 7,8-diaminopelargonic acid (DAPA, also called 7,8-diammoniononanoate) to form a ureido ring. This chain is ATP-dependent dethiobiotin synthetase BioD, found in Endomicrobium trichonymphae.